A 291-amino-acid chain; its full sequence is Nucleotide-binding protein Athe_0320 (291 aa).

An ATP-binding site is contributed by 9-16; it reads GMSGAGKS. Residue 60–63 participates in GTP binding; sequence DIRG.

It belongs to the RapZ-like family.

Its function is as follows. Displays ATPase and GTPase activities. The polypeptide is Nucleotide-binding protein Athe_0320 (Caldicellulosiruptor bescii (strain ATCC BAA-1888 / DSM 6725 / KCTC 15123 / Z-1320) (Anaerocellum thermophilum)).